We begin with the raw amino-acid sequence, 257 residues long: Neuroendocrine secretory protein 55 (257 aa).

The N-terminal stretch at 1–46 (MDRRSRAQQWRRARHNYNDLCPPIGRRAATALLWLSCSIALLRALA) is a signal peptide. A disordered region spans residues 61–257 (SFLNAHHRSA…RKGPIPIRRH (197 aa)). A compositionally biased stretch (low complexity) spans 70 to 82 (AAAAAAAQVLPES). Residues 86–103 (ESDHEHEEVEPELARPEC) show a composition bias toward basic and acidic residues. The span at 104–139 (LEYDQDDYETETDSETEPESDIESETEIETEPETEP) shows a compositional bias: acidic residues. Residues 200–211 (EPQRGPLDQDPR) are compositionally biased toward basic and acidic residues. Basic residues predominate over residues 227-237 (PRRCKTRRPAR).

Belongs to the NESP55 family. Binds keratan sulfate chains. In terms of processing, may be proteolytically processed to give rise to a number of active peptides.

The protein localises to the cytoplasmic vesicle. It localises to the secretory vesicle. Its subcellular location is the secreted. The protein is Neuroendocrine secretory protein 55 of Mus musculus (Mouse).